Here is an 870-residue protein sequence, read N- to C-terminus: Leucine--tRNA ligase (870 aa).

The 'HIGH' region signature appears at 43-53 (PYPSGRIHMGH). Positions 630–634 (KMSKS) match the 'KMSKS' region motif. Lysine 633 is an ATP binding site.

It belongs to the class-I aminoacyl-tRNA synthetase family.

The protein localises to the cytoplasm. The enzyme catalyses tRNA(Leu) + L-leucine + ATP = L-leucyl-tRNA(Leu) + AMP + diphosphate. The chain is Leucine--tRNA ligase from Parvibaculum lavamentivorans (strain DS-1 / DSM 13023 / NCIMB 13966).